The chain runs to 353 residues: Photosystem II D2 protein (353 aa).

At T2 the chain carries N-acetylthreonine. T2 carries the post-translational modification Phosphothreonine. A helical membrane pass occupies residues C41–T61. Position 118 (H118) interacts with chlorophyll a. Residues G125–P141 traverse the membrane as a helical segment. 2 residues coordinate pheophytin a: Q130 and N143. The chain crosses the membrane as a helical span at residues V153 to S166. Residue H198 coordinates chlorophyll a. The helical transmembrane segment at A208–D228 threads the bilayer. 2 residues coordinate a plastoquinone: H215 and F262. H215 serves as a coordination point for Fe cation. H269 contributes to the Fe cation binding site. Residues G279–R295 traverse the membrane as a helical segment.

Belongs to the reaction center PufL/M/PsbA/D family. As to quaternary structure, PSII is composed of 1 copy each of membrane proteins PsbA, PsbB, PsbC, PsbD, PsbE, PsbF, PsbH, PsbI, PsbJ, PsbK, PsbL, PsbM, PsbT, PsbX, PsbY, PsbZ, Psb30/Ycf12, at least 3 peripheral proteins of the oxygen-evolving complex and a large number of cofactors. It forms dimeric complexes. The D1/D2 heterodimer binds P680, chlorophylls that are the primary electron donor of PSII, and subsequent electron acceptors. It shares a non-heme iron and each subunit binds pheophytin, quinone, additional chlorophylls, carotenoids and lipids. There is also a Cl(-1) ion associated with D1 and D2, which is required for oxygen evolution. The PSII complex binds additional chlorophylls, carotenoids and specific lipids. is required as a cofactor.

It is found in the plastid. Its subcellular location is the chloroplast thylakoid membrane. It carries out the reaction 2 a plastoquinone + 4 hnu + 2 H2O = 2 a plastoquinol + O2. In terms of biological role, photosystem II (PSII) is a light-driven water:plastoquinone oxidoreductase that uses light energy to abstract electrons from H(2)O, generating O(2) and a proton gradient subsequently used for ATP formation. It consists of a core antenna complex that captures photons, and an electron transfer chain that converts photonic excitation into a charge separation. The D1/D2 (PsbA/PsbD) reaction center heterodimer binds P680, the primary electron donor of PSII as well as several subsequent electron acceptors. D2 is needed for assembly of a stable PSII complex. The protein is Photosystem II D2 protein of Nicotiana tabacum (Common tobacco).